Here is an 812-residue protein sequence, read N- to C-terminus: MLKLLRPRPWVCNSCLNRVAFPKPYPVGSRSTRWLSTAQSAAPAVSIPPVNPVPADHTTSGTHDDALLGKIFDCSSAWRDFSARSAKFPTENAGLFRNAYLTSPDGFLTFAQSSLSKASAIVNRVLGASTIEEYKTIVRDLDRLSDLLCRVIDLSDFVRVTHPDVRIQRAASEAWYMVYQYMNQLNTMTGLNDQLGKAMENSDVTKTWSEEEMAVAQLLKLDFMKSAVNLPQAARDRFVDLSQRISEIGSDFVNEMAPEQRRVVLPSSKFQGMDPQIARRFTKHGYMQLPTMSGEAAAALRTVHDEETRKAVYLAIRTASSRSVGLLEALLKHRAELADLAGFESYGHMTLRDRMMAKTPESINKFLVELSKNNAPRVLQEVDSLLQEKKTLLASPSATLNPWDREYYIQRIRNAQGKNVKHDNFFASYFSVGRVMQGLSRLFTRLYGIRFVPRETLPGEKWHPDVRRLDVVSDTDGHVAVLYCDLFYREDKSPNPAHFTIRCSRAISEDEISEAAVSTSEGGPAFGSPESAANDGMAASRGASGGPLKQLPTIALVCDFPQRDNPLSGSKSKPASLTFASLETLFHEMGHAIHSVLARTSFQNVAGTRCATDLAELPSTLMEYFASDPSVLSLFARHAETDEPLDYDLLAERVRSRGRFEGCDTDYQIILAMLDQAYHSPLASSESFDTTRAYHDLQREHSPLGPDPSSTRWQGFFGHLFGYGSTYYSYLFDQVLAERAWKKVFSSGQDGAALSREAGEHLKESLLKWGGSREPWRCVSDVLRDERIAGGGEEAMALVGSWGTSNKSTMKH.

The N-terminal 35 residues, 1–35, are a transit peptide targeting the mitochondrion; the sequence is MLKLLRPRPWVCNSCLNRVAFPKPYPVGSRSTRWL. The interval 518 to 544 is disordered; that stretch reads STSEGGPAFGSPESAANDGMAASRGAS. Residue histidine 587 participates in Zn(2+) binding. Residue glutamate 588 is part of the active site. Zn(2+) contacts are provided by histidine 591 and histidine 594.

This sequence belongs to the peptidase M3 family. The cofactor is Zn(2+).

It is found in the mitochondrion matrix. The catalysed reaction is Release of an N-terminal octapeptide as second stage of processing of some proteins imported into the mitochondrion.. Cleaves proteins, imported into the mitochondrion, to their mature size. While most mitochondrial precursor proteins are processed to the mature form in one step by mitochondrial processing peptidase (MPP), the sequential cleavage by MIP of an octapeptide after initial processing by MPP is a required step for a subgroup of nuclear-encoded precursor proteins destined for the matrix or the inner membrane. This Pyricularia oryzae (strain 70-15 / ATCC MYA-4617 / FGSC 8958) (Rice blast fungus) protein is Mitochondrial intermediate peptidase (OCT1).